Reading from the N-terminus, the 576-residue chain is Protein alan shepard (576 aa).

Positions 1–12 (MHPRYSPAPPPQ) are enriched in pro residues. The segment at 1–66 (MHPRYSPAPP…GSSSSAAAAP (66 aa)) is disordered. At tyrosine 5 the chain carries Phosphotyrosine. Low complexity predominate over residues 13–24 (QQQQMGGPPHQQ). Over residues 25–35 (QGGGGGGGGNM) the composition is skewed to gly residues. A compositionally biased stretch (polar residues) spans 37-54 (GPSNAQQLPPQIPRSQNY). The span at 55-66 (SNGSSSSAAAAP) shows a compositional bias: low complexity. Phosphotyrosine is present on residues tyrosine 125 and tyrosine 142. Positions 164-225 (PATTTYGQRV…TVQNQNQQGG (62 aa)) are disordered. A compositionally biased stretch (low complexity) spans 178–225 (SPSNTNSSSSSNTGSQSGTLSTSLSNTTNTNTNMGPNGTVQNQNQQGG). RRM domains lie at 231 to 302 (TNLY…MAKQ) and 308 to 387 (TNLY…FADG). Residues 538–576 (YAPPPTIIPTMPMTDSEQASTAASPDEAYTQYPHQAAPK) are disordered.

In terms of biological role, has a role in the perception of gravity. This Drosophila simulans (Fruit fly) protein is Protein alan shepard.